A 258-amino-acid polypeptide reads, in one-letter code: UPF0246 protein CJA_0191 (258 aa).

This sequence belongs to the UPF0246 family.

The chain is UPF0246 protein CJA_0191 from Cellvibrio japonicus (strain Ueda107) (Pseudomonas fluorescens subsp. cellulosa).